A 1031-amino-acid polypeptide reads, in one-letter code: Zinc finger protein 445 (1031 aa).

The disordered stretch occupies residues 1–43 (MPPGRWHAAYPAQAQSSRERGRLQTVKKEEEDESYTPVQAARP). A compositionally biased stretch (basic and acidic residues) spans 17-29 (SRERGRLQTVKKE). A Glycyl lysine isopeptide (Lys-Gly) (interchain with G-Cter in SUMO1) cross-link involves residue Lys-28. One can recognise an SCAN box domain in the interval 55–137 (RQLFRQLRYH…ALLEELQRDL (83 aa)). A KRAB domain is found at 234-304 (MTFKDVEVTF…NMQAAQPKGN (71 aa)). Residues Lys-317, Lys-374, Lys-375, and Lys-399 each participate in a glycyl lysine isopeptide (Lys-Gly) (interchain with G-Cter in SUMO2) cross-link. C2H2-type zinc fingers lie at residues 485-507 (FKCSDCGRTFSHSSHLAYHQRLH), 513-535 (FKCRVCGKAFRWSSNCARHEKIH), and 541-563 (YKCDLCEKAFRRLSAYRLHRETH). Lys-567 participates in a covalent cross-link: Glycyl lysine isopeptide (Lys-Gly) (interchain with G-Cter in SUMO2). C2H2-type zinc fingers lie at residues 597–619 (FDCSQCRKSFHCKSYVLEHQRIH) and 625–647 (YKCTKCRKTFRWRSNFTRHMRLH). A Glycyl lysine isopeptide (Lys-Gly) (interchain with G-Cter in SUMO2) cross-link involves residue Lys-654. 2 consecutive C2H2-type zinc fingers follow at residues 681–703 (FLCQQCGKTFTRKKTLVDHQRIH) and 709–731 (YQCSDCGKDFAYRSAFIVHKKKH). Residues Lys-736 and Lys-758 each participate in a glycyl lysine isopeptide (Lys-Gly) (interchain with G-Cter in SUMO2) cross-link. 5 consecutive C2H2-type zinc fingers follow at residues 762 to 784 (YKCSQCGKAFRNHSFLLIHQRVH), 790 to 812 (YKCRECGKAFRWSSNLYRHQRIH), 840 to 862 (FWCQECGKTFTRKRTLLDHKGIH), 868 to 890 (YKCNLCGKSYDRNYRLVNHQRIH), and 896 to 918 (FKCQWCGKEFIGRHTLSSHQRKH). Residues 911–939 (LSSHQRKHTRAAQAERSPPARSSSQDTKL) form a disordered region. Residues Lys-938, Lys-956, and Lys-975 each participate in a glycyl lysine isopeptide (Lys-Gly) (interchain with G-Cter in SUMO2) cross-link. C2H2-type zinc fingers lie at residues 978 to 1000 (HKCSICGKTFNKSSQLISHKRFH) and 1006 to 1028 (FKCSKCGKTFRWSSNLARHMKNH).

The protein belongs to the krueppel C2H2-type zinc-finger protein family.

Its subcellular location is the nucleus. Its function is as follows. Transcription regulator required to maintain maternal and paternal gene imprinting, a process by which gene expression is restricted in a parent of origin-specific manner by epigenetic modification of genomic DNA and chromatin, including DNA methylation. Acts by controlling DNA methylation during the earliest multicellular stages of development at multiple imprinting control regions (ICRs). Acts together with ZFP57, but seems to be the major factor in human early embryonic imprinting maintenance. In contrast, in mice, ZFP57 plays the predominant role in imprinting maintenance. The protein is Zinc finger protein 445 of Homo sapiens (Human).